The primary structure comprises 471 residues: Pneumolysin (471 aa).

Transmembrane regions (beta stranded) follow at residues 158–171 (MEQL…DFEK), 178–187 (IDFNSVHSGE), 256–265 (SDEVEAAFEA), and 273–285 (APQT…LDNT). The short motif at 427–437 (ECTGLAWEWWR) is the Conserved undecapeptide element. The short motif at 459-460 (TL) is the Cholesterol binding element.

The protein belongs to the cholesterol-dependent cytolysin family. Elongated monomers align along their lengths, indicating intersubunit contacts and suggesting the prepore structure. Modeling based on cryo-EM shows a homooligomeric pore complex containing 38-44 subunits; when inserted in the host membrane. The size of isolated pores is detergent-dependent; in amphipol A8-35 homogenous rings form with 42 subunits.

It is found in the secreted. It localises to the host cell membrane. Its activity is regulated as follows. Erythrocytes hemolysis is inhibited by cholesterol. Functionally, a cholesterol-dependent toxin that causes cytolysis by forming pores in cholesterol-containing host membranes. After binding to target membranes, the protein undergoes a major conformation change, leading to its insertion in the host membrane and formation of an oligomeric pore complex. Cholesterol is required for binding to host membranes, membrane insertion and pore formation; cholesterol binding is mediated by a Thr-Leu pair in the C-terminus. Can be reversibly inactivated by oxidation. This chain is Pneumolysin (ply), found in Streptococcus pneumoniae serotype 2 (strain D39 / NCTC 7466).